Reading from the N-terminus, the 426-residue chain is Trophoblast glycoprotein (426 aa).

The first 31 residues, Met-1–Ala-31, serve as a signal peptide directing secretion. The Extracellular portion of the chain corresponds to Ser-32–Ser-361. A compositionally biased stretch (low complexity) spans Pro-34 to Ser-51. Positions Pro-34–Ala-54 are disordered. The LRRNT domain maps to Ser-53 to Pro-91. 2 disulfide bridges follow: Cys-62–Cys-68 and Cys-66–Cys-77. LRR repeat units follow at residues Tyr-92–Arg-113, Pro-116–Glu-139, and Leu-141–Ala-163. The N-linked (GlcNAc...) asparagine glycan is linked to Asn-124. The N-linked (GlcNAc...) asparagine glycan is linked to Asn-166. LRR repeat units lie at residues Pro-172–Arg-210, Leu-215–Gln-238, Leu-239–Arg-261, and Asn-262–Asn-281. Asn-281 carries N-linked (GlcNAc...) asparagine glycosylation. An LRRCT domain is found at Gly-289–Ala-352. 2 disulfide bridges follow: Cys-304-Cys-329 and Cys-306-Cys-350. A helical membrane pass occupies residues Tyr-362 to Leu-382. The Cytoplasmic portion of the chain corresponds to Asn-383–Val-426. Residue Ser-424 is modified to Phosphoserine.

In terms of processing, highly glycosylated.

Its subcellular location is the cell membrane. May function as an inhibitor of Wnt/beta-catenin signaling by indirectly interacting with LRP6 and blocking Wnt3a-dependent LRP6 internalization. The polypeptide is Trophoblast glycoprotein (Tpbg) (Rattus norvegicus (Rat)).